Reading from the N-terminus, the 343-residue chain is Glucan endo-1,3-beta-glucosidase, acidic isoform GI9 (343 aa).

The first 29 residues, 1–29, serve as a signal peptide directing secretion; the sequence is MTLCIKNGFLAAALVLVGLLICSIQMIGA. Position 30 is a pyrrolidone carboxylic acid (Gln30). Residue Glu124 is the Proton donor of the active site. Glu264 functions as the Nucleophile in the catalytic mechanism.

The protein belongs to the glycosyl hydrolase 17 family.

It localises to the secreted. Its subcellular location is the extracellular space. It catalyses the reaction Hydrolysis of (1-&gt;3)-beta-D-glucosidic linkages in (1-&gt;3)-beta-D-glucans.. In terms of biological role, implicated in the defense of plants against pathogens. In Nicotiana tabacum (Common tobacco), this protein is Glucan endo-1,3-beta-glucosidase, acidic isoform GI9 (PR2).